A 192-amino-acid chain; its full sequence is Mitochondrial import inner membrane translocase subunit TIM18 (192 aa).

The N-terminal 42 residues, M1–L42, are a transit peptide targeting the mitochondrion. Over N43 to T88 the chain is Mitochondrial matrix. Residues L89–L109 traverse the membrane as a helical segment. Residues L110–S113 lie on the Mitochondrial intermembrane side of the membrane. Residues L114–I134 traverse the membrane as a helical segment. Residues P135 to K144 are Mitochondrial matrix-facing. The helical transmembrane segment at L145–E165 threads the bilayer. At T166–N192 the chain is on the mitochondrial intermembrane side.

It belongs to the CybS family. Component of the TIM22 complex, whose core is composed of TIM18, TIM22 and TIM54, associated with the peripheral proteins MRS5/TIM12 and the 70 kDa heterohexamer composed of TIM9 and TIM10 (or TIM8 and TIM13).

Its subcellular location is the mitochondrion inner membrane. Its function is as follows. Component of the TIM22 complex, a complex that mediates the import and insertion of multi-pass transmembrane proteins into the mitochondrial inner membrane. The TIM22 complex forms a twin-pore translocase that uses the membrane potential as external driving force. Its role in the complex is unclear but it may be involved in the assembly and stabilization of the TIM22 complex. The sequence is that of Mitochondrial import inner membrane translocase subunit TIM18 (TIM18) from Saccharomyces cerevisiae (strain ATCC 204508 / S288c) (Baker's yeast).